Reading from the N-terminus, the 121-residue chain is Regulator of ribonuclease activity B (121 aa).

This sequence belongs to the RraB family. In terms of assembly, interacts with the C-terminal region of Rne.

It is found in the cytoplasm. In terms of biological role, globally modulates RNA abundance by binding to RNase E (Rne) and regulating its endonucleolytic activity. Can modulate Rne action in a substrate-dependent manner by altering the composition of the degradosome. The polypeptide is Regulator of ribonuclease activity B (Psychromonas ingrahamii (strain DSM 17664 / CCUG 51855 / 37)).